A 329-amino-acid polypeptide reads, in one-letter code: DNA-directed RNA polymerase subunit alpha (329 aa).

The interval 1-231 (MSILSFQMPE…KHFMLFSDQT (231 aa)) is alpha N-terminal domain (alpha-NTD). The interval 247–329 (EEFLHMRKLL…DTAKYKLDED (83 aa)) is alpha C-terminal domain (alpha-CTD).

The protein belongs to the RNA polymerase alpha chain family. Homodimer. The RNAP catalytic core consists of 2 alpha, 1 beta, 1 beta' and 1 omega subunit. When a sigma factor is associated with the core the holoenzyme is formed, which can initiate transcription.

It catalyses the reaction RNA(n) + a ribonucleoside 5'-triphosphate = RNA(n+1) + diphosphate. DNA-dependent RNA polymerase catalyzes the transcription of DNA into RNA using the four ribonucleoside triphosphates as substrates. In Cytophaga hutchinsonii (strain ATCC 33406 / DSM 1761 / CIP 103989 / NBRC 15051 / NCIMB 9469 / D465), this protein is DNA-directed RNA polymerase subunit alpha.